The chain runs to 425 residues: Histone-binding protein RBBP4-B (425 aa).

The residue at position 2 (Ala-2) is an N-acetylalanine. WD repeat units follow at residues 32 to 125 (YDLV…NHEG), 126 to 175 (EVNR…RLRG), 176 to 223 (HQKE…KTIF), 225 to 270 (GHTA…HSVD), 271 to 314 (AHTA…HSFE), 315 to 371 (SHKD…FIHG), and 372 to 404 (GHTA…VWQM).

Belongs to the WD repeat RBAP46/RBAP48/MSI1 family. Binds directly to histone H4, probably via helix 1 of the histone fold, a region that is not accessible when histone H4 is in chromatin. Probably forms a large corepressor complex that contains ncor1, sin3a, hdac1-A and/or hdac1-B, hdac2, rbbp4-A and/or rbbp4-B and possibly rbbp7.

The protein resides in the nucleus. The protein localises to the chromosome. It localises to the telomere. In terms of biological role, core histone-binding subunit that may target chromatin assembly factors, chromatin remodeling factors and histone deacetylases to their histone substrates in a manner that is regulated by nucleosomal DNA. Component of several complexes which regulate chromatin metabolism. This chain is Histone-binding protein RBBP4-B (rbbp4-b), found in Xenopus laevis (African clawed frog).